Reading from the N-terminus, the 202-residue chain is Glycolipid transfer protein 1 (202 aa).

A ganglioside GM3 (d18:1(4E))-binding residues include Asp52, Asn56, Trp99, and His138.

The protein belongs to the GLTP family.

In terms of biological role, may be involved in glycolipids transfer. The chain is Glycolipid transfer protein 1 from Arabidopsis thaliana (Mouse-ear cress).